The sequence spans 146 residues: Large ribosomal subunit protein uL15 (146 aa).

The interval Met1 to Glu51 is disordered. Composition is skewed to gly residues over residues Thr23–Gln35 and Ser42–Glu51.

This sequence belongs to the universal ribosomal protein uL15 family. Part of the 50S ribosomal subunit.

Binds to the 23S rRNA. This chain is Large ribosomal subunit protein uL15, found in Streptococcus sanguinis (strain SK36).